The chain runs to 232 residues: Clarin-2 (232 aa).

A helical membrane pass occupies residues 10–30; that stretch reads YGLASLLSFSSFILIIVALVV. The N-linked (GlcNAc...) asparagine glycan is linked to N48. The next 3 membrane-spanning stretches (helical) occupy residues 101–121, 139–159, and 188–208; these read ILLL…FAIL, LWNV…VAAV, and SFWI…VVAI.

Belongs to the clarin family.

The protein resides in the cell projection. It localises to the stereocilium membrane. Plays a key role to hearing function. Required for normal organization and maintenance of the stereocilia bundle and for mechano-electrical transduction. The sequence is that of Clarin-2 from Homo sapiens (Human).